We begin with the raw amino-acid sequence, 34 residues long: Non-toxic venom protein (34 aa).

The 34-residue stretch at 1–34 (KEGYPTNSEGCKITXLFNDPYCKGXCINLSTQAD) folds into the LCN-type CS-alpha/beta domain.

In terms of tissue distribution, expressed by the venom gland.

It localises to the secreted. Functionally, does not cause symptoms of intoxication, paralysis or death in insects (A.domestica). This Rhopalurus junceus (Caribbean blue scorpion) protein is Non-toxic venom protein.